A 338-amino-acid polypeptide reads, in one-letter code: UDP-3-O-acylglucosamine N-acyltransferase (338 aa).

H239 acts as the Proton acceptor in catalysis.

This sequence belongs to the transferase hexapeptide repeat family. LpxD subfamily. In terms of assembly, homotrimer.

It carries out the reaction a UDP-3-O-[(3R)-3-hydroxyacyl]-alpha-D-glucosamine + a (3R)-hydroxyacyl-[ACP] = a UDP-2-N,3-O-bis[(3R)-3-hydroxyacyl]-alpha-D-glucosamine + holo-[ACP] + H(+). Its pathway is bacterial outer membrane biogenesis; LPS lipid A biosynthesis. Functionally, catalyzes the N-acylation of UDP-3-O-acylglucosamine using 3-hydroxyacyl-ACP as the acyl donor. Is involved in the biosynthesis of lipid A, a phosphorylated glycolipid that anchors the lipopolysaccharide to the outer membrane of the cell. In Xylella fastidiosa (strain M23), this protein is UDP-3-O-acylglucosamine N-acyltransferase.